Here is a 197-residue protein sequence, read N- to C-terminus: Adenylate kinase (197 aa).

16-21 lines the ATP pocket; sequence GAGKGT. The NMP stretch occupies residues 36–65; that stretch reads STGDILRDHVARGTALGQQAGPLMEAGQLV. AMP is bound by residues Thr37, Arg42, 63 to 65, 90 to 93, and Gln97; these read QLV and GFPR. The LID stretch occupies residues 131-147; it reads DRGRQAVAEGRAPRADD. ATP is bound at residue Arg132. The tract at residues 137–158 is disordered; the sequence is VAEGRAPRADDNEETARKRQQV. Positions 141-153 are enriched in basic and acidic residues; sequence RAPRADDNEETAR. 2 residues coordinate AMP: Arg144 and Arg155. Gly183 contacts ATP.

This sequence belongs to the adenylate kinase family. Monomer.

It localises to the cytoplasm. The catalysed reaction is AMP + ATP = 2 ADP. The protein operates within purine metabolism; AMP biosynthesis via salvage pathway; AMP from ADP: step 1/1. Catalyzes the reversible transfer of the terminal phosphate group between ATP and AMP. Plays an important role in cellular energy homeostasis and in adenine nucleotide metabolism. This Deinococcus radiodurans (strain ATCC 13939 / DSM 20539 / JCM 16871 / CCUG 27074 / LMG 4051 / NBRC 15346 / NCIMB 9279 / VKM B-1422 / R1) protein is Adenylate kinase.